The following is a 232-amino-acid chain: Large ribosomal subunit protein uL1 (232 aa).

Belongs to the universal ribosomal protein uL1 family. In terms of assembly, part of the 50S ribosomal subunit.

Functionally, binds directly to 23S rRNA. The L1 stalk is quite mobile in the ribosome, and is involved in E site tRNA release. Its function is as follows. Protein L1 is also a translational repressor protein, it controls the translation of the L11 operon by binding to its mRNA. This is Large ribosomal subunit protein uL1 from Cereibacter sphaeroides (strain ATCC 17025 / ATH 2.4.3) (Rhodobacter sphaeroides).